Reading from the N-terminus, the 501-residue chain is ATP synthase subunit alpha (501 aa).

Residue 169–176 (GDRQTGKT) coordinates ATP.

The protein belongs to the ATPase alpha/beta chains family. As to quaternary structure, F-type ATPases have 2 components, CF(1) - the catalytic core - and CF(0) - the membrane proton channel. CF(1) has five subunits: alpha(3), beta(3), gamma(1), delta(1), epsilon(1). CF(0) has three main subunits: a(1), b(2) and c(9-12). The alpha and beta chains form an alternating ring which encloses part of the gamma chain. CF(1) is attached to CF(0) by a central stalk formed by the gamma and epsilon chains, while a peripheral stalk is formed by the delta and b chains.

Its subcellular location is the cell membrane. The enzyme catalyses ATP + H2O + 4 H(+)(in) = ADP + phosphate + 5 H(+)(out). Functionally, produces ATP from ADP in the presence of a proton gradient across the membrane. The alpha chain is a regulatory subunit. This is ATP synthase subunit alpha from Streptococcus pneumoniae serotype 2 (strain D39 / NCTC 7466).